The primary structure comprises 270 residues: Undecaprenyl-diphosphatase 1 (270 aa).

The next 6 membrane-spanning stretches (helical) occupy residues Asn79–Ser99, Val105–Trp125, Leu155–Gly175, Thr182–Ile202, Val215–Leu235, and Ser242–Trp262.

It belongs to the UppP family.

It localises to the cell inner membrane. The enzyme catalyses di-trans,octa-cis-undecaprenyl diphosphate + H2O = di-trans,octa-cis-undecaprenyl phosphate + phosphate + H(+). Functionally, catalyzes the dephosphorylation of undecaprenyl diphosphate (UPP). Confers resistance to bacitracin. The protein is Undecaprenyl-diphosphatase 1 of Chromobacterium violaceum (strain ATCC 12472 / DSM 30191 / JCM 1249 / CCUG 213 / NBRC 12614 / NCIMB 9131 / NCTC 9757 / MK).